Here is a 471-residue protein sequence, read N- to C-terminus: Trigger factor (471 aa).

A PPIase FKBP-type domain is found at 169–264 (GDVAVVDFKG…LKEIKEKELP (96 aa)). Residues 443–471 (SLASQESEITAPETEAETIEVTAESTTGE) are disordered. Residues 448-471 (ESEITAPETEAETIEVTAESTTGE) show a composition bias toward low complexity.

This sequence belongs to the FKBP-type PPIase family. Tig subfamily.

The protein resides in the cytoplasm. The enzyme catalyses [protein]-peptidylproline (omega=180) = [protein]-peptidylproline (omega=0). In terms of biological role, involved in protein export. Acts as a chaperone by maintaining the newly synthesized protein in an open conformation. Functions as a peptidyl-prolyl cis-trans isomerase. In Trichormus variabilis (strain ATCC 29413 / PCC 7937) (Anabaena variabilis), this protein is Trigger factor.